Consider the following 397-residue polypeptide: DnaJ homolog subfamily A member 1 (397 aa).

One can recognise a J domain in the interval Thr6–Gly68. Lys66 is modified (N6-acetyllysine). A Phosphoserine modification is found at Ser83. The segment at Gly121–Lys205 adopts a CR-type zinc-finger fold. Positions 134, 137, 150, 153, 177, 180, 193, and 196 each coordinate Zn(2+). 4 CXXCXGXG motif repeats span residues Cys134–Gly141, Cys150–Gly157, Cys177–Gly184, and Cys193–Lys200. At Ser335 the chain carries Phosphoserine. The interval Val352–Ser397 is disordered. Residues Glu353–Asp365 are compositionally biased toward acidic residues. At Tyr381 the chain carries Phosphotyrosine. Residue Cys394 is modified to Cysteine methyl ester. Cys394 is lipidated: S-farnesyl cysteine. Residues Gln395 to Ser397 constitute a propeptide, removed in mature form.

In terms of assembly, identified in a complex with HSPA1B and BAX. Interacts with RNF207.

Its subcellular location is the membrane. It localises to the cytoplasm. It is found in the microsome. The protein resides in the mitochondrion. The protein localises to the nucleus. Its subcellular location is the perinuclear region. Functionally, co-chaperone for HSPA8/Hsc70. Plays a role in protein transport into mitochondria via its role as co-chaperone. Functions as co-chaperone for HSPA1B and negatively regulates the translocation of BAX from the cytosol to mitochondria in response to cellular stress, thereby protecting cells against apoptosis. Stimulates ATP hydrolysis, but not the folding of unfolded proteins mediated by HSPA1A (in vitro). Promotes apoptosis in response to cellular stress mediated by exposure to anisomycin or UV. This is DnaJ homolog subfamily A member 1 (DNAJA1) from Chlorocebus aethiops (Green monkey).